Consider the following 456-residue polypeptide: F-box/FBD/LRR-repeat protein At1g13780 (456 aa).

Residues 9–55 (FDRISELPESLISQILLHLPTKASVKTSVLSTRWKNLWLNVPGLDLN) enclose the F-box domain. 4 LRR repeats span residues 197 to 220 (LEEL…SLKR), 243 to 266 (APGL…NLTS), 302 to 325 (ISSV…SKVG), and 355 to 379 (FPNL…ELVN). The FBD domain occupies 372–424 (MEKFELVNVPRCFVSTLEHVEIKGLFDWGEQDMKIASYFLENSAVLKKLILSF).

The sequence is that of F-box/FBD/LRR-repeat protein At1g13780 from Arabidopsis thaliana (Mouse-ear cress).